The primary structure comprises 319 residues: Acetyl-coenzyme A carboxylase carboxyl transferase subunit alpha (319 aa).

The CoA carboxyltransferase C-terminal domain maps to 35-296 (NIDEEVHRLR…KAQLLEDLAD (262 aa)).

The protein belongs to the AccA family. In terms of assembly, acetyl-CoA carboxylase is a heterohexamer composed of biotin carboxyl carrier protein (AccB), biotin carboxylase (AccC) and two subunits each of ACCase subunit alpha (AccA) and ACCase subunit beta (AccD).

The protein resides in the cytoplasm. The enzyme catalyses N(6)-carboxybiotinyl-L-lysyl-[protein] + acetyl-CoA = N(6)-biotinyl-L-lysyl-[protein] + malonyl-CoA. It functions in the pathway lipid metabolism; malonyl-CoA biosynthesis; malonyl-CoA from acetyl-CoA: step 1/1. Component of the acetyl coenzyme A carboxylase (ACC) complex. First, biotin carboxylase catalyzes the carboxylation of biotin on its carrier protein (BCCP) and then the CO(2) group is transferred by the carboxyltransferase to acetyl-CoA to form malonyl-CoA. In Salmonella dublin (strain CT_02021853), this protein is Acetyl-coenzyme A carboxylase carboxyl transferase subunit alpha.